The following is a 328-amino-acid chain: Aspartate carbamoyltransferase catalytic subunit (328 aa).

Carbamoyl phosphate is bound by residues R64 and T65. K92 is a binding site for L-aspartate. Residues R114, H144, and Q147 each contribute to the carbamoyl phosphate site. 2 residues coordinate L-aspartate: R177 and R232. Residues G273 and P274 each coordinate carbamoyl phosphate.

Belongs to the aspartate/ornithine carbamoyltransferase superfamily. ATCase family. In terms of assembly, heterododecamer (2C3:3R2) of six catalytic PyrB chains organized as two trimers (C3), and six regulatory PyrI chains organized as three dimers (R2).

The catalysed reaction is carbamoyl phosphate + L-aspartate = N-carbamoyl-L-aspartate + phosphate + H(+). The protein operates within pyrimidine metabolism; UMP biosynthesis via de novo pathway; (S)-dihydroorotate from bicarbonate: step 2/3. In terms of biological role, catalyzes the condensation of carbamoyl phosphate and aspartate to form carbamoyl aspartate and inorganic phosphate, the committed step in the de novo pyrimidine nucleotide biosynthesis pathway. The chain is Aspartate carbamoyltransferase catalytic subunit from Halorhodospira halophila (strain DSM 244 / SL1) (Ectothiorhodospira halophila (strain DSM 244 / SL1)).